The chain runs to 559 residues: NAD-dependent malic enzyme 2 (559 aa).

The active-site Proton donor is the Tyr-98. Residue Arg-151 coordinates NAD(+). Residue Lys-169 is the Proton acceptor of the active site. The a divalent metal cation site is built by Glu-240, Asp-241, and Asp-264. Positions 264 and 413 each coordinate NAD(+).

This sequence belongs to the malic enzymes family. Homotetramer. The cofactor is Mg(2+). It depends on Mn(2+) as a cofactor.

The catalysed reaction is (S)-malate + NAD(+) = pyruvate + CO2 + NADH. The enzyme catalyses oxaloacetate + H(+) = pyruvate + CO2. This Vibrio vulnificus (strain YJ016) protein is NAD-dependent malic enzyme 2.